We begin with the raw amino-acid sequence, 174 residues long: Phosphopantetheine adenylyltransferase (174 aa).

A substrate-binding site is contributed by T10. Residues 10 to 11 (TF) and H18 contribute to the ATP site. Residues K44, L76, and R90 each coordinate substrate. ATP contacts are provided by residues 91 to 93 (GLR), E101, and 126 to 132 (HAYISSS).

This sequence belongs to the bacterial CoaD family. As to quaternary structure, homohexamer. The cofactor is Mg(2+).

The protein resides in the cytoplasm. It carries out the reaction (R)-4'-phosphopantetheine + ATP + H(+) = 3'-dephospho-CoA + diphosphate. Its pathway is cofactor biosynthesis; coenzyme A biosynthesis; CoA from (R)-pantothenate: step 4/5. Reversibly transfers an adenylyl group from ATP to 4'-phosphopantetheine, yielding dephospho-CoA (dPCoA) and pyrophosphate. The chain is Phosphopantetheine adenylyltransferase from Alkalilimnicola ehrlichii (strain ATCC BAA-1101 / DSM 17681 / MLHE-1).